The following is a 666-amino-acid chain: MKQYAIQPANLEFNAEGTPVSRDFDDVYFSNDNGLEETRYVFLGGNQLEERFPLHPRPLFVVAESGFGTGLNFLTLWQAFSQFRDAHPEATLQRLHFISFEKFPLTQADLALAHQHWPELAPWAQQLHAQWPLPLAGCHRLILDDGRVTLDLWFGDINELTGKLDESLNQKVDAWFLDGFAPAKNPDMWTQNLFSTMARLARPGGTLATFTSAGFVRRGLQEAGFTMQKRKGFGRKREMLCGVMAHALTFPSPTPWFTRSGSAKRDVAIIGGGIASALLSLALLRRGWQVTLYCSDEQPAQGASGNRQGALYPLLSKHDAAINLFFPSAFTFARRLYDALPVTFDHDWCGVTQLGWDEKSQHKIDQMLSLALPDALAVAVDPDQAQQETGVATHCRGITYPAGGWLCPAQLTAALLALAATQGLRRHYTHTLTALSRQATGWQLQFAEGKAVEHEVVVLANGHQINHVDQTRPLPVYSVAGQVSHIPTTPALSALRQVLCYDGYLTPQNPATHQHCIGASYHRGSEETAYREDDQQQNRQRLIDCFPDAAWAKEVDISEKAARCGVRCATRDHLPMVGNVPDYDATLAQYAALARQKDAAERAPVYPDLFMLGALGSRGLCSAPLCAEILAAQMSEEPIPMDADTLAALNPNRLWVRKLLKGKAVK.

A tRNA (mnm(5)s(2)U34)-methyltransferase region spans residues 1–245 (MKQYAIQPAN…KREMLCGVMA (245 aa)). Residues 270 to 666 (IGGGIASALL…RKLLKGKAVK (397 aa)) form an FAD-dependent cmnm(5)s(2)U34 oxidoreductase region.

This sequence in the N-terminal section; belongs to the methyltransferase superfamily. tRNA (mnm(5)s(2)U34)-methyltransferase family. The protein in the C-terminal section; belongs to the DAO family. FAD is required as a cofactor.

The protein resides in the cytoplasm. It catalyses the reaction 5-aminomethyl-2-thiouridine(34) in tRNA + S-adenosyl-L-methionine = 5-methylaminomethyl-2-thiouridine(34) in tRNA + S-adenosyl-L-homocysteine + H(+). In terms of biological role, catalyzes the last two steps in the biosynthesis of 5-methylaminomethyl-2-thiouridine (mnm(5)s(2)U) at the wobble position (U34) in tRNA. Catalyzes the FAD-dependent demodification of cmnm(5)s(2)U34 to nm(5)s(2)U34, followed by the transfer of a methyl group from S-adenosyl-L-methionine to nm(5)s(2)U34, to form mnm(5)s(2)U34. This chain is tRNA 5-methylaminomethyl-2-thiouridine biosynthesis bifunctional protein MnmC, found in Citrobacter koseri (strain ATCC BAA-895 / CDC 4225-83 / SGSC4696).